The chain runs to 253 residues: tRNA (guanine-N(1)-)-methyltransferase (253 aa).

S-adenosyl-L-methionine-binding positions include glycine 111 and 131–136 (LGDFVL).

This sequence belongs to the RNA methyltransferase TrmD family. In terms of assembly, homodimer.

It localises to the cytoplasm. It catalyses the reaction guanosine(37) in tRNA + S-adenosyl-L-methionine = N(1)-methylguanosine(37) in tRNA + S-adenosyl-L-homocysteine + H(+). In terms of biological role, specifically methylates guanosine-37 in various tRNAs. The polypeptide is tRNA (guanine-N(1)-)-methyltransferase (Synechococcus sp. (strain JA-3-3Ab) (Cyanobacteria bacterium Yellowstone A-Prime)).